The following is a 278-amino-acid chain: Asnovolin E/Chermesin D methyltransferase nvfJ (278 aa).

S-adenosyl-L-methionine is bound by residues 125–126 (DL), 152–153 (NI), and 153–154 (IL).

The protein belongs to the class I-like SAM-binding methyltransferase superfamily. In terms of assembly, homodimer.

It catalyses the reaction chermesin D + S-adenosyl-L-methionine = chermesin D methyl ester + S-adenosyl-L-homocysteine. The catalysed reaction is asnovolin I + S-adenosyl-L-methionine = asnovolin K + S-adenosyl-L-homocysteine. Its pathway is secondary metabolite biosynthesis; terpenoid biosynthesis. Methyltransferase; part of the gene cluster that mediates the biosynthesis of novofumigatonin, a heavily oxygenated meroterpenoid containing a unique orthoester moiety. The first step of the pathway is the synthesis of 3,5-dimethylorsellinic acid (DMOA) by the polyketide synthase nvfA via condensation of one acetyl-CoA starter unit with 3 malonyl-CoA units and 2 methylations. DMOA is then converted to farnesyl-DMOA by the farnesyltransferase nvfB. Epoxydation by FAD-dependent monooxygenase nvfK, followed by a protonation-initiated cyclization catalyzed by the terpene cyclase nvfL leads to the production of asnavolin H. The short chain dehydrogenase nvfC then as a 3-OH dehydrogenase of asnovolin H to yield chemesin D. There are two branches to synthesize asnovolin A from chemesin D. In one branch, chemesin D undergoes Baeyer-Villiger oxidation by nvfH, methylation by nvfJ, and enoyl reduction by the nvfM D enoylreductase that reduces the double bond between C-5'and C-6', to form respectively asnovolin I, asnovolin K, and asnovolin A. In the other branch, the methylation precedes the Baeyer-Villiger oxidation and the enoyl reduction to yield asnovolin A via the asnovolin J intermediate. Asnovolin A is further converted to fumigatonoid A by the Fe(II)/2-oxoglutarate-dependent dioxygenase nvfI that catalyzes an endoperoxidation reaction. The alpha/beta hydrolase nvfD then acts as an epimerase that converts fumigatonoid A to its C-5' epimer, which then undergoes spontaneous or nvfD-catalyzed lactonization. The following step utilizes the ketoreductase nvfG to produce fumigatonoid B. The dioxygenase nvfE further converts fumigatonoid B into fumigatonoid C. Finally the Fe(II)/2-oxoglutarate-dependent dioxygenase nvfF catalyzes two rounds of oxidation to transform fumigatonoid C into the end product, novofumigatonin A. This is Asnovolin E/Chermesin D methyltransferase nvfJ from Aspergillus novofumigatus (strain IBT 16806).